The chain runs to 488 residues: Glutamyl-tRNA(Gln) amidotransferase subunit A (488 aa).

Residues Lys79 and Ser159 each act as charge relay system in the active site. Catalysis depends on Ser183, which acts as the Acyl-ester intermediate.

This sequence belongs to the amidase family. GatA subfamily. In terms of assembly, heterotrimer of A, B and C subunits.

It catalyses the reaction L-glutamyl-tRNA(Gln) + L-glutamine + ATP + H2O = L-glutaminyl-tRNA(Gln) + L-glutamate + ADP + phosphate + H(+). Functionally, allows the formation of correctly charged Gln-tRNA(Gln) through the transamidation of misacylated Glu-tRNA(Gln) in organisms which lack glutaminyl-tRNA synthetase. The reaction takes place in the presence of glutamine and ATP through an activated gamma-phospho-Glu-tRNA(Gln). This chain is Glutamyl-tRNA(Gln) amidotransferase subunit A, found in Wolbachia pipientis subsp. Culex pipiens (strain wPip).